The sequence spans 364 residues: UDP-arabinopyranose mutase 1 (364 aa).

The DXD motif signature appears at 110–112 (DDD). Arg-158 carries an N-linked (Glc...) arginine glycan.

This sequence belongs to the RGP family. In terms of assembly, heteromers with UAM2 and UAM3. It depends on Mn(2+) as a cofactor. Mg(2+) serves as cofactor. Reversibly glycosylated in vitro at Arg-158 by UDP-glucose. Reversibly glycosylated by UDP-xylose and UDP-galactose.

It is found in the golgi apparatus. The enzyme catalyses UDP-beta-L-arabinofuranose = UDP-beta-L-arabinopyranose. In terms of biological role, UDP-L-arabinose mutase involved in the biosynthesis of cell wall non-cellulosic polysaccharides. Catalyzes the interconvertion of UDP-L-arabinopyranose (UDP-Arap) and UDP-L-arabinofuranose (UDP-Araf). Preferentially catalyzes the formation of UDP-Arap from UDP-Araf. At thermodynamic equilibrium in vitro the ratio of the pyranose form over the furanose form is 90:10. Is probably active as heteromer in vivo. The polypeptide is UDP-arabinopyranose mutase 1 (Oryza sativa subsp. japonica (Rice)).